The following is a 128-amino-acid chain: Small ribosomal subunit protein uS8c (128 aa).

This sequence belongs to the universal ribosomal protein uS8 family. Part of the 30S ribosomal subunit.

The protein resides in the plastid. It is found in the chloroplast. In terms of biological role, one of the primary rRNA binding proteins, it binds directly to 16S rRNA central domain where it helps coordinate assembly of the platform of the 30S subunit. The protein is Small ribosomal subunit protein uS8c (rps8) of Welwitschia mirabilis (Tree tumbo).